Reading from the N-terminus, the 855-residue chain is Glucans biosynthesis glucosyltransferase H (855 aa).

6 helical membrane passes run 142-162, 196-216, 515-535, 572-592, 606-626, and 682-702; these read ILLT…KGIL, ILVL…TALM, VFLT…FLVL, LFST…ILIW, TLSM…RMIF, and FLWW…VSVI.

Belongs to the glycosyltransferase 2 family. OpgH subfamily.

Its subcellular location is the cell inner membrane. Its pathway is glycan metabolism; osmoregulated periplasmic glucan (OPG) biosynthesis. Involved in the biosynthesis of osmoregulated periplasmic glucans (OPGs). The sequence is that of Glucans biosynthesis glucosyltransferase H from Pseudomonas entomophila (strain L48).